We begin with the raw amino-acid sequence, 198 residues long: MHYPEPISKLIDSFMKLPGIGPKTAVRLAFFVLDMKEDDVLGFAKALVNAKRDLAYCSVCGHITDRDPCYICNDSHRDQSVVCVVQEPKDVIAMEKMKEYQGVYHVLRGAISPMEGIGPEDINIPQLLKRLHDETVQEVILATNPNIEGEATAMYISRLLKPTGIKVTRIAHGLPVGGDLEYADEVTLSKALEGRREV.

The C4-type zinc finger occupies 57-72 (CSVCGHITDRDPCYIC). The 96-residue stretch at 80–175 (SVVCVVQEPK…KVTRIAHGLP (96 aa)) folds into the Toprim domain.

Belongs to the RecR family.

Functionally, may play a role in DNA repair. It seems to be involved in an RecBC-independent recombinational process of DNA repair. It may act with RecF and RecO. The polypeptide is Recombination protein RecR (Bacillus thuringiensis (strain Al Hakam)).